Here is a 557-residue protein sequence, read N- to C-terminus: Hydroxylamine reductase (557 aa).

4 residues coordinate [4Fe-4S] cluster: Cys3, Cys6, Cys19, and Cys26. Hybrid [4Fe-2O-2S] cluster is bound by residues His253, Glu277, Cys321, Cys408, Cys436, Cys461, Glu495, and Lys497. Residue Cys408 is modified to Cysteine persulfide.

It belongs to the HCP family. The cofactor is [4Fe-4S] cluster. It depends on hybrid [4Fe-2O-2S] cluster as a cofactor.

It localises to the cytoplasm. It carries out the reaction A + NH4(+) + H2O = hydroxylamine + AH2 + H(+). Catalyzes the reduction of hydroxylamine to form NH(3) and H(2)O. In Acidiphilium cryptum (strain JF-5), this protein is Hydroxylamine reductase.